A 288-amino-acid chain; its full sequence is ATP phosphoribosyltransferase (288 aa).

It belongs to the ATP phosphoribosyltransferase family. Long subfamily. The cofactor is Mg(2+).

Its subcellular location is the cytoplasm. It carries out the reaction 1-(5-phospho-beta-D-ribosyl)-ATP + diphosphate = 5-phospho-alpha-D-ribose 1-diphosphate + ATP. The protein operates within amino-acid biosynthesis; L-histidine biosynthesis; L-histidine from 5-phospho-alpha-D-ribose 1-diphosphate: step 1/9. With respect to regulation, feedback inhibited by histidine. Catalyzes the condensation of ATP and 5-phosphoribose 1-diphosphate to form N'-(5'-phosphoribosyl)-ATP (PR-ATP). Has a crucial role in the pathway because the rate of histidine biosynthesis seems to be controlled primarily by regulation of HisG enzymatic activity. This Methanococcus maripaludis (strain DSM 14266 / JCM 13030 / NBRC 101832 / S2 / LL) protein is ATP phosphoribosyltransferase.